Here is a 157-residue protein sequence, read N- to C-terminus: MSRKGNTPQRSVLPDPKHGSETIARFINMVMQSGKKSVAEKIVYGAMDVITEKNSSANAIELVQKALDNVAPAVEVKSRRVGGATYQVPVEVRSSRKMALAMRWLIDSARKRGENTMPKKLAAELIDASENRGGAIKKREETHRMAEANKAFAHYRW.

Belongs to the universal ribosomal protein uS7 family. In terms of assembly, part of the 30S ribosomal subunit. Contacts proteins S9 and S11.

Functionally, one of the primary rRNA binding proteins, it binds directly to 16S rRNA where it nucleates assembly of the head domain of the 30S subunit. Is located at the subunit interface close to the decoding center, probably blocks exit of the E-site tRNA. The polypeptide is Small ribosomal subunit protein uS7 (Stenotrophomonas maltophilia (strain R551-3)).